The sequence spans 144 residues: 3-hydroxyacyl-[acyl-carrier-protein] dehydratase FabZ (144 aa).

Residue His47 is part of the active site.

The protein belongs to the thioester dehydratase family. FabZ subfamily.

The protein resides in the cytoplasm. The catalysed reaction is a (3R)-hydroxyacyl-[ACP] = a (2E)-enoyl-[ACP] + H2O. Involved in unsaturated fatty acids biosynthesis. Catalyzes the dehydration of short chain beta-hydroxyacyl-ACPs and long chain saturated and unsaturated beta-hydroxyacyl-ACPs. The sequence is that of 3-hydroxyacyl-[acyl-carrier-protein] dehydratase FabZ from Alcanivorax borkumensis (strain ATCC 700651 / DSM 11573 / NCIMB 13689 / SK2).